A 410-amino-acid polypeptide reads, in one-letter code: Lissencephaly-1 homolog (410 aa).

In terms of domain architecture, LisH spans 7–39 (QRDELNRAIADYLRSNGYEEAYSTFKKEAELDN). Residues 32 to 82 (KKEAELDNNEELDKKYAGLLEKKWTSVIRLQKKVMELESKLNEAKEEITLG) adopt a coiled-coil conformation. WD repeat units lie at residues 106–147 (GHRS…RTLK), 148–189 (GHTD…RTMH), 190–229 (GHDH…CVKT), 232–271 (GHRE…CKAE), 274–333 (EHEH…CLMT), 336–375 (GHDN…CMKT), and 378–410 (AHEH…WECR).

It belongs to the WD repeat LIS1/nudF family. Can self-associate. Component of the cytosolic PAF-AH (I) heterotetrameric enzyme, which is composed of PAFAH1B1 (beta), PAFAH1B2 (alpha2) and PAFAH1B3 (alpha1) subunits. The catalytic activity of the enzyme resides in the alpha1 (PAFAH1B3) and alpha2 (PAFAH1B2) subunits, whereas the beta subunit (PAFAH1B1) has regulatory activity. Trimer formation is not essential for the catalytic activity. Interacts with dynein, dynactin, nde1 and ndel1.

Its subcellular location is the cytoplasm. The protein resides in the cytoskeleton. It is found in the microtubule organizing center. It localises to the centrosome. Regulatory subunit (beta subunit) of the cytosolic type I platelet-activating factor (PAF) acetylhydrolase (PAF-AH (I)), an enzyme that catalyzes the hydrolyze of the acetyl group at the sn-2 position of PAF and its analogs and participates in the PAF inactivation. Positively regulates the activity of the minus-end directed microtubule motor protein dynein. May enhance dynein-mediated microtubule sliding by targeting dynein to the microtubule plus end. Required for several dynein- and microtubule-dependent processes such as the maintenance of Golgi integrity, the peripheral transport of microtubule fragments and the coupling of the nucleus and centrosome. May be required for proliferation of neuronal precursors and neuronal migration. This chain is Lissencephaly-1 homolog (pafah1b1), found in Tetraodon nigroviridis (Spotted green pufferfish).